A 1174-amino-acid chain; its full sequence is Pecanex-like protein 4 (1174 aa).

14 consecutive transmembrane segments (helical) span residues 40–60 (IYVN…TGTL), 72–92 (AAAL…LISV), 140–160 (TVFH…YLLP), 173–193 (TAVL…SLIV), 217–237 (LYIF…NIPA), 244–264 (ILHI…LPPP), 284–304 (SMST…AAVV), 307–327 (FIPS…LLSL), 366–386 (FLFI…HHYV), 394–414 (SGAQ…VWIL), 451–471 (IGAV…VAFL), 543–563 (LIQF…LWTE), 580–600 (VFAP…SPLL), and 643–663 (LTAA…LPGS). The span at 785–797 (PSTQENKTENTGE) shows a compositional bias: polar residues. The interval 785-875 (PSTQENKTEN…DDHSAGTGPK (91 aa)) is disordered. Asn790 carries N-linked (GlcNAc...) asparagine glycosylation. Residues 798-810 (ASPALPPAANSSP) show a composition bias toward low complexity. Basic and acidic residues predominate over residues 835 to 846 (PAIKNRKEKLQS). N-linked (GlcNAc...) asparagine glycans are attached at residues Asn1122 and Asn1149.

The protein belongs to the pecanex family.

Its subcellular location is the membrane. The chain is Pecanex-like protein 4 from Mus musculus (Mouse).